The sequence spans 839 residues: MGPRATTICSLFFLLWVLAEPAENSDFYLPGDYLLGGLFSLHANMKGIVHLNFLQVPMCKEYEVKVIGYNLMQDMRFSVEEINNDSSLLPGVLLGYEMVDVCYVSNNVQPVLYFLAHEDNLLPIQEDYSDYVSRVVAVIGPDNSESVMTVANFLSLFLLPQITYSAISDELRDKVRFPALLRTTPSADHHIEAMVQLMLHFRWNWIIVLVSSDTYGRDNGQLLGERLARRDICIAFQETLPTLQPNQNMTSEERQRLVTIVDKLQQSTARVVVVFSPDLTLYDFFNEVLRQNFTGAVWIASESWAIDPVLHNLTELRHTGTFLGITIQSVPIPGFSEFRERDSQAGPPPLGKTSQRSTCNQECDNCLNATLSFNTILRLSGERVVYSVYSAVYAVAHALHSLLGCDHSTCTKRVVYPWQLLEEIWKVNFTLLDHQIFFDPQGDMALHLEIVQWQWDRSQNPFQSVASYHPLQRQLKNIQDISWHTINNTIPVSMCSKRCQSGQKKKPVGIHVCCFECIDCLPGTFLNHTEDEYECQACPSNEWSYQSETSCFKRQLAFLEWHEAPTIAVALLAALGFLSTLAILVIFWRHFQTPMVRSAGGPMCFLMLTLLLVAYMVVPVYVGPPKVSTCLCRQALFPLCFTICISCIAVRSFQIICAFKMASRFPRAYSYWVRYQGPYVSMAFITVLKMVIVVIGMLATGLNPTTRTDPDDPKIMIVSCNPNYRNSLLFNTSLDLLLSVVGFSFANMGKELPTNYNEAKFITLSMTFYFTSSISLCTFMSAYSGVLVTIVDLLVTVLNLLAISLGYFGPKCYMILFYPERNTPAYFNSVIQGYTMTRD.

The N-terminal stretch at 1-19 (MGPRATTICSLFFLLWVLA) is a signal peptide. At 20–566 (EPAENSDFYL…AFLEWHEAPT (547 aa)) the chain is on the extracellular side. N-linked (GlcNAc...) asparagine glycosylation is found at N84, N248, N292, N312, N368, N428, N487, and N527. Residues 567 to 587 (IAVALLAALGFLSTLAILVIF) traverse the membrane as a helical segment. The Cytoplasmic portion of the chain corresponds to 588-602 (WRHFQTPMVRSAGGP). Residues 603–623 (MCFLMLTLLLVAYMVVPVYVG) form a helical membrane-spanning segment. The Extracellular segment spans residues 624–635 (PPKVSTCLCRQA). A helical membrane pass occupies residues 636–656 (LFPLCFTICISCIAVRSFQII). Topologically, residues 657–681 (CAFKMASRFPRAYSYWVRYQGPYVS) are cytoplasmic. The chain crosses the membrane as a helical span at residues 682–702 (MAFITVLKMVIVVIGMLATGL). Over 703 to 727 (NPTTRTDPDDPKIMIVSCNPNYRNS) the chain is Extracellular. Residues 728–748 (LLFNTSLDLLLSVVGFSFANM) form a helical membrane-spanning segment. Residues 749–760 (GKELPTNYNEAK) lie on the Cytoplasmic side of the membrane. Residues 761–781 (FITLSMTFYFTSSISLCTFMS) form a helical membrane-spanning segment. Over 782-784 (AYS) the chain is Extracellular. Residues 785-805 (GVLVTIVDLLVTVLNLLAISL) traverse the membrane as a helical segment. At 806-839 (GYFGPKCYMILFYPERNTPAYFNSVIQGYTMTRD) the chain is on the cytoplasmic side.

It belongs to the G-protein coupled receptor 3 family. TAS1R subfamily. In terms of assembly, forms heterodimers with TAS1R3.

It is found in the cell membrane. Functionally, putative taste receptor. TAS1R2/TAS1R3 recognizes diverse natural and synthetic sweeteners. In Pongo pygmaeus (Bornean orangutan), this protein is Taste receptor type 1 member 2 (TAS1R2).